We begin with the raw amino-acid sequence, 54 residues long: Protein YmjE (54 aa).

The protein is Protein YmjE of Escherichia coli (strain K12).